Reading from the N-terminus, the 199-residue chain is Recombination protein RecR (199 aa).

The C4-type zinc-finger motif lies at 57-72 (CSICGNITEDDPCVIC). A Toprim domain is found at 80–176 (STVLVVEEAK…KVTRLAHGLS (97 aa)).

Belongs to the RecR family.

Functionally, may play a role in DNA repair. It seems to be involved in an RecBC-independent recombinational process of DNA repair. It may act with RecF and RecO. This Lactiplantibacillus plantarum (strain ATCC BAA-793 / NCIMB 8826 / WCFS1) (Lactobacillus plantarum) protein is Recombination protein RecR.